An 86-amino-acid polypeptide reads, in one-letter code: UPF0291 protein LBA1279 (86 aa).

2 stretches are compositionally biased toward basic and acidic residues: residues 1 to 27 (MNKD…KENE) and 65 to 75 (NGKEVTSEKAK). 2 disordered regions span residues 1-36 (MNKD…EEEE) and 65-86 (NGKE…LRKD). Positions 76–86 (QAQRKKGLRKD) are enriched in basic residues.

The protein belongs to the UPF0291 family.

It is found in the cytoplasm. The chain is UPF0291 protein LBA1279 from Lactobacillus acidophilus (strain ATCC 700396 / NCK56 / N2 / NCFM).